The primary structure comprises 396 residues: Calreticulin (396 aa).

A signal peptide spans 1-15 (MKSLCLLAIVAVVSA). Residues Cys101 and Cys133 are joined by a disulfide bond. The an alpha-D-glucoside site is built by Tyr105, Lys107, Tyr124, and Asp131. Repeat copies occupy residues 186–197 (AQTGSLEEDWDL), 205–216 (DPDAKKPEDWDE), 222–233 (DAEDVKPEDWEK), 239–250 (DPDAKKPEDWDD), 254–264 (GEWEPPMIDNP), 268–278 (GEWKPKQIKNP), and 282–292 (GKWIHPEIENP). Positions 186–250 (AQTGSLEEDW…DAKKPEDWDD (65 aa)) are 4 X approximate repeats. The interval 193–301 (EDWDLLPAKK…PEYTPDDELY (109 aa)) is P-domain. The segment covering 202–212 (KIKDPDAKKPE) has biased composition (basic and acidic residues). Residues 202–250 (KIKDPDAKKPEDWDEREYIDDAEDVKPEDWEKPEHIPDPDAKKPEDWDD) form a disordered region. Residues 213–224 (DWDEREYIDDAE) are compositionally biased toward acidic residues. Over residues 225 to 246 (DVKPEDWEKPEHIPDPDAKKPE) the composition is skewed to basic and acidic residues. The 3 X approximate repeats stretch occupies residues 254–292 (GEWEPPMIDNPEYKGEWKPKQIKNPAYKGKWIHPEIENP). Residues 302-396 (LYENWGAIGF…KEEEEGHDEL (95 aa)) form a C-domain region. Asp312 provides a ligand contact to an alpha-D-glucoside. Basic and acidic residues predominate over residues 342 to 380 (FDKLKTVEKEKKEKADEEARKVEEEARKKAEEEKEAKKD). The tract at residues 342-396 (FDKLKTVEKEKKEKADEEARKVEEEARKKAEEEKEAKKDDDEEEEKEEEEGHDEL) is disordered. A compositionally biased stretch (acidic residues) spans 381-396 (DDEEEEKEEEEGHDEL). The Prevents secretion from ER signature appears at 393-396 (HDEL).

Belongs to the calreticulin family.

It localises to the endoplasmic reticulum lumen. In terms of biological role, molecular calcium-binding chaperone promoting folding, oligomeric assembly and quality control in the ER via the calreticulin/calnexin cycle. This lectin may interact transiently with almost all of the monoglucosylated glycoproteins that are synthesized in the ER. Probably by controlling the folding of extracellular matrix protein unc-52/Perlecan, may play a role in the formation of fibrous organelles, a hemidesmosome-like structure attaching muscles to the epidermis. Protects dopaminergic neurons against oxidative stress-induced neurodegeneration. The protein is Calreticulin (crt-1) of Caenorhabditis briggsae.